The following is a 391-amino-acid chain: 12-oxophytodienoate reductase 3 (391 aa).

Met1 is modified (N-acetylmethionine). Thr2 carries the N-acetylthreonine; in 12-oxophytodienoate reductase 3, N-terminally processed modification. FMN-binding positions include 31–33, Gly64, and Gln106; that span reads PMT. Position 186 (His186) interacts with substrate. Tyr191 (proton donor) is an active-site residue. Arg238 provides a ligand contact to FMN. Substrate is bound at residue Arg284. Residues 320–322 and 343–344 each bind FMN; these read SGG and GR. The short motif at 389 to 391 is the Microbody targeting signal element; the sequence is SRL.

It belongs to the NADH:flavin oxidoreductase/NADH oxidase family. It depends on FMN as a cofactor. As to expression, expressed in green seedling, leaves, flowers (anthers, pistil, petal and stamen), and to a lower extent in roots and siliques. Specifically expressed in filament during anther dehiscence initiation.

Its subcellular location is the peroxisome. The catalysed reaction is (1S,2S)-OPC-8 + NADP(+) = (9S,13S,15Z)-12-oxophyto-10,15-dienoate + NADPH + H(+). It participates in lipid metabolism; oxylipin biosynthesis. Functionally, specifically cleaves olefinic bonds in cyclic enones. Involved in the biosynthesis of jasmonic acid (JA) and perhaps in biosynthesis or metabolism of other oxylipin signaling moleclules. Required for the spatial and temporal regulation of JA levels during dehiscence of anthers, promoting the stomium degeneration program. In vitro, reduces 9S,13S-12-oxophytodienoic acid (9S,13S-OPDA) and 9R,13R-OPDA to 9S,13S-OPC-8:0 and 9R,13R-OPC-8:0, respectively. Can detoxify the explosive 2,4,6-trinitrotoluene (TNT) in vitro by catalyzing its nitroreduction to form hydroxylamino-dinitrotoluene (HADNT). This is 12-oxophytodienoate reductase 3 from Arabidopsis thaliana (Mouse-ear cress).